We begin with the raw amino-acid sequence, 1404 residues long: DNA-directed RNA polymerase subunit beta' (1404 aa).

The Zn(2+) site is built by Cys70, Cys72, Cys85, and Cys88. Mg(2+)-binding residues include Asp460, Asp462, and Asp464. Positions 814, 888, 895, and 898 each coordinate Zn(2+).

The protein belongs to the RNA polymerase beta' chain family. In terms of assembly, the RNAP catalytic core consists of 2 alpha, 1 beta, 1 beta' and 1 omega subunit. When a sigma factor is associated with the core the holoenzyme is formed, which can initiate transcription. Mg(2+) serves as cofactor. Requires Zn(2+) as cofactor.

It catalyses the reaction RNA(n) + a ribonucleoside 5'-triphosphate = RNA(n+1) + diphosphate. In terms of biological role, DNA-dependent RNA polymerase catalyzes the transcription of DNA into RNA using the four ribonucleoside triphosphates as substrates. This is DNA-directed RNA polymerase subunit beta' from Shewanella pealeana (strain ATCC 700345 / ANG-SQ1).